Reading from the N-terminus, the 378-residue chain is Ret finger protein-like 2 (378 aa).

The RING-type; degenerate zinc finger occupies 101 to 143; that stretch reads CPVCSDYLEKPMSLECGCAVCLKCINSLQKEPHGEDLLCCCSS. A B30.2/SPRY domain is found at 168–362; the sequence is EPKLKKILQM…DQGVLSICPL (195 aa).

In terms of tissue distribution, seems to be expressed in prostate and less abundantly in adult brain, fetal liver, and fetal kidney.

This is Ret finger protein-like 2 (RFPL2) from Homo sapiens (Human).